The following is a 512-amino-acid chain: Tyrosine decarboxylase (512 aa).

Residues Pro100, His205, and His320 each coordinate L-tyrosine. The residue at position 321 (Lys321) is an N6-(pyridoxal phosphate)lysine. Position 350 (Tyr350) interacts with L-tyrosine.

The protein belongs to the group II decarboxylase family. As to quaternary structure, homodimer. Pyridoxal 5'-phosphate serves as cofactor. Mainly expressed in roots, stems and capsule walls.

It carries out the reaction L-tyrosine + H(+) = tyramine + CO2. Functionally, tyrosine decarboxylase that converts tyrosine into tyramine, a precursor of isoquinoline alkaloids and various amides. The polypeptide is Tyrosine decarboxylase (Papaver somniferum (Opium poppy)).